Here is a 237-residue protein sequence, read N- to C-terminus: NAD-dependent protein deacylase (237 aa).

The Deacetylase sirtuin-type domain occupies 1 to 235 (MRIAVLSGAG…PGLLQRLPAL (235 aa)). An NAD(+)-binding site is contributed by 8-28 (GAGISAESGVPTFRDDKNGLW). Tyr53 and Arg56 together coordinate substrate. NAD(+) is bound at residue 86-89 (QNVD). Catalysis depends on His104, which acts as the Proton acceptor. The Zn(2+) site is built by Cys112, Cys115, Cys138, and Cys140. NAD(+)-binding positions include 177-179 (GTS), 203-205 (NPE), and Ala221.

Belongs to the sirtuin family. Class III subfamily. Zn(2+) serves as cofactor.

It is found in the cytoplasm. It carries out the reaction N(6)-acetyl-L-lysyl-[protein] + NAD(+) + H2O = 2''-O-acetyl-ADP-D-ribose + nicotinamide + L-lysyl-[protein]. The catalysed reaction is N(6)-succinyl-L-lysyl-[protein] + NAD(+) + H2O = 2''-O-succinyl-ADP-D-ribose + nicotinamide + L-lysyl-[protein]. In terms of biological role, NAD-dependent lysine deacetylase and desuccinylase that specifically removes acetyl and succinyl groups on target proteins. Modulates the activities of several proteins which are inactive in their acylated form. The protein is NAD-dependent protein deacylase of Mycolicibacterium paratuberculosis (strain ATCC BAA-968 / K-10) (Mycobacterium paratuberculosis).